The primary structure comprises 522 residues: Glucose-6-phosphate 1-dehydrogenase (522 aa).

Residues 40–47 (GASGDLAK), arginine 74, and lysine 177 contribute to the NADP(+) site. D-glucose 6-phosphate is bound by residues lysine 177, 207 to 211 (HYLGK), glutamate 245, and aspartate 264. The Proton acceptor role is filled by histidine 269. Arginine 364 is an NADP(+) binding site. The D-glucose 6-phosphate site is built by lysine 367 and lysine 372. NADP(+) is bound by residues lysine 373, arginine 377, and arginine 401. Residue glutamine 403 coordinates D-glucose 6-phosphate. Residues 409–411 (YMK), 429–431 (DLT), arginine 495, and tryptophan 517 each bind NADP(+).

Belongs to the glucose-6-phosphate dehydrogenase family.

The protein localises to the cytoplasm. It is found in the cytosol. It catalyses the reaction D-glucose 6-phosphate + NADP(+) = 6-phospho-D-glucono-1,5-lactone + NADPH + H(+). The protein operates within carbohydrate degradation; pentose phosphate pathway; D-ribulose 5-phosphate from D-glucose 6-phosphate (oxidative stage): step 1/3. Cytosolic glucose-6-phosphate dehydrogenase that catalyzes the first and rate-limiting step of the oxidative branch within the pentose phosphate pathway/shunt, an alternative route to glycolysis for the dissimilation of carbohydrates and a major source of reducing power and metabolic intermediates for fatty acid and nucleic acid biosynthetic processes. The polypeptide is Glucose-6-phosphate 1-dehydrogenase (gspd-1) (Caenorhabditis elegans).